Consider the following 493-residue polypeptide: F(420)H(2) dehydrogenase subunit N (493 aa).

14 helical membrane-spanning segments follow: residues 7 to 27 (LAPE…GVFL), 34 to 54 (ILGY…VKSF), 78 to 98 (LSQF…IASI), 107 to 127 (TEEF…VASA), 130 to 150 (LILL…LAGF), 165 to 185 (FVIG…VYGA), 205 to 225 (PIGI…MALV), 244 to 264 (ALLA…VFII), 273 to 293 (WQFM…VVAV), 310 to 330 (AGYI…GGIM), 333 to 353 (LAHA…VWMI), 381 to 401 (ALCM…AGFM), 404 to 424 (FVLF…IAIL), and 454 to 474 (IPFP…VMGL).

This sequence belongs to the complex I subunit 2 family. In terms of assembly, the FPO complex is composed of at least 13 different subunits. FpoA, FpoH, FpoJ, FpoK, FpoL, FpoM and FpoN proteins constitute the membrane sector of the complex.

The protein localises to the cell membrane. The catalysed reaction is methanophenazine + reduced coenzyme F420-(gamma-L-Glu)(n) = dihydromethanophenazine + oxidized coenzyme F420-(gamma-L-Glu)(n) + H(+). Its function is as follows. Component of the F(420)H(2) dehydrogenase (FPO complex) which is part of the energy-conserving F(420)H(2):heterodisulfide oxidoreductase system. The membrane-bound electron transfer system of the complex plays an important role in the metabolism of methylotrophic methanogens when the organisms grow on methanol or methylamines. Catalyzes the oxidation of methanophenazine to dihydromethanophenazine. It shuttles electrons from F(420)H(2), via FAD and iron-sulfur (Fe-S) centers, to methanophenazine (an electron carrier in the membrane). It couples the redox reaction to proton translocation (for every two electrons transferred, two hydrogen ions are translocated across the cytoplasmic membrane), and thus conserves the redox energy in a proton gradient. It also catalyzes the oxidation of F(420)H(2) with quinones such as 2,3-dimethyl-1,4-naphthoquinone, 2-methyl-1,4-naphthoquinone and tetramethyl-p-benzoquinone. The protein is F(420)H(2) dehydrogenase subunit N (fpoN) of Methanosarcina mazei (strain ATCC BAA-159 / DSM 3647 / Goe1 / Go1 / JCM 11833 / OCM 88) (Methanosarcina frisia).